The following is a 662-amino-acid chain: Envelope glycoprotein (662 aa).

The first 34 residues, 1–34, serve as a signal peptide directing secretion; sequence MESPTHPKPSKDKTLSWNLVFLVGILFTIDIGMA. The Extracellular segment spans residues 35-606; that stretch reads NPSPHQVYNV…FNKSPWFTTL (572 aa). 2 N-linked (GlcNAc...) asparagine; by host glycosylation sites follow: asparagine 43 and asparagine 58. Intrachain disulfides connect cysteine 115–cysteine 132 and cysteine 124–cysteine 137. A disordered region spans residues 245–279; the sequence is AMGPNLVLPDQKPPSRQSQIESRVTPHHSQGNGGT. A compositionally biased stretch (polar residues) spans 258 to 274; sequence PSRQSQIESRVTPHHSQ. N-linked (GlcNAc...) asparagine; by host glycans are attached at residues asparagine 286, asparagine 322, and asparagine 327. 3 disulfide bridges follow: cysteine 332–cysteine 335, cysteine 332–cysteine 559, and cysteine 551–cysteine 558. The CXXC motif lies at 332–335; sequence CWLC. N-linked (GlcNAc...) asparagine; by host glycosylation is found at asparagine 351, asparagine 354, asparagine 394, asparagine 410, and asparagine 430. Positions 468–488 are fusion peptide; the sequence is ISLTVALMLGGLTVGGIAAGV. Coiled-coil stretches lie at residues 496–545 and 555–591; these read IETA…ILFL and KEEC…SQQG. Residues 534-550 form an immunosuppression region; that stretch reads LQNRRGLDILFLQEGGL. The short motif at 551–559 is the CX6CC element; sequence CAALKEECC. A helical transmembrane segment spans residues 607–627; it reads ISSIMGPLLILLLILLFGPCI. Cysteine 626 carries S-palmitoyl cysteine; by host lipidation. Topologically, residues 628-662 are cytoplasmic; it reads LNRLVQFVKDRISVVQALILTQQYQQIKQYDPDRP.

In terms of assembly, the mature envelope protein (Env) consists of a trimer of SU-TM heterodimers attached by a labile interchain disulfide bond. Specific enzymatic cleavages in vivo yield mature proteins. Envelope glycoproteins are synthesized as an inactive precursor that is N-glycosylated and processed likely by host cell furin or by a furin-like protease in the Golgi to yield the mature SU and TM proteins. The cleavage site between SU and TM requires the minimal sequence [KR]-X-[KR]-R. The R-peptide is released from the C-terminus of the cytoplasmic tail of the TM protein upon particle formation as a result of proteolytic cleavage by the viral protease. Cleavage of this peptide is required for TM to become fusogenic. Post-translationally, the CXXC motif is highly conserved across a broad range of retroviral envelope proteins. It is thought to participate in the formation of a labile disulfide bond possibly with the CX6CC motif present in the transmembrane protein. Isomerization of the intersubunit disulfide bond to an SU intrachain disulfide bond is thought to occur upon receptor recognition in order to allow membrane fusion. In terms of processing, the transmembrane protein is palmitoylated. The R-peptide is palmitoylated.

The protein resides in the virion membrane. It localises to the host cell membrane. Its function is as follows. The surface protein (SU) attaches the virus to the host cell by binding to its receptor. This interaction triggers the refolding of the transmembrane protein (TM) and is thought to activate its fusogenic potential by unmasking its fusion peptide. Fusion occurs at the host cell plasma membrane. Functionally, the transmembrane protein (TM) acts as a class I viral fusion protein. Under the current model, the protein has at least 3 conformational states: pre-fusion native state, pre-hairpin intermediate state, and post-fusion hairpin state. During viral and target cell membrane fusion, the coiled coil regions (heptad repeats) assume a trimer-of-hairpins structure, positioning the fusion peptide in close proximity to the C-terminal region of the ectodomain. The formation of this structure appears to drive apposition and subsequent fusion of viral and target cell membranes. Membranes fusion leads to delivery of the nucleocapsid into the cytoplasm. The chain is Envelope glycoprotein (env) from Felidae (cat family).